The following is a 363-amino-acid chain: MTPPLLEIRNVTRRFGDFTAVDNVSLTINTGEFFTLLGPSGCGKTTLLRMLAGFDQPDSGEIRLNGQDLAGVEPEKRPVHTVFQSYALFPHMSVAQNIAFPLKMAGVAKSEIDARVEQALKDVRLADKGGRMPTQLSGGQRQRVAIARALVNRPRLLLLDEPLSALDAKLREEMQIELINLQKDVGITFVYVTHDQGEALALSHRIAVMNQGRVEQLDAPETIYSFPRSRFVADFIGQCNLLDATVEAVDGERVRIDLRGLGEVQALKSFDAQPGEACVLTLRPEKIRLAQSVTADSDEVHFRGRVAELLYLGDVTLYIVELENGERLETLLPNATPGRAKFFEVGDAVEAAWRFDAGHLVRA.

The 231-residue stretch at 6–236 (LEIRNVTRRF…PRSRFVADFI (231 aa)) folds into the ABC transporter domain. 38 to 45 (GPSGCGKT) is a binding site for ATP.

This sequence belongs to the ABC transporter superfamily. Spermidine/putrescine importer (TC 3.A.1.11.1) family. In terms of assembly, the complex is composed of two ATP-binding proteins (PotA), two transmembrane proteins (PotB and PotC) and a solute-binding protein (PotD).

It is found in the cell inner membrane. It carries out the reaction ATP + H2O + polyamine-[polyamine-binding protein]Side 1 = ADP + phosphate + polyamineSide 2 + [polyamine-binding protein]Side 1.. Part of the ABC transporter complex PotABCD involved in spermidine/putrescine import. Responsible for energy coupling to the transport system. The polypeptide is Spermidine/putrescine import ATP-binding protein PotA 2 (Pseudomonas aeruginosa (strain ATCC 15692 / DSM 22644 / CIP 104116 / JCM 14847 / LMG 12228 / 1C / PRS 101 / PAO1)).